The sequence spans 394 residues: MQVKKLTDLDVRGKKVFIRADLNVPQDEAGNITEDTRIRASIPSIQYCLDNGAAVMVTSHLGRPTEGEVGPDDTLAPVAVRLGQLLHKPVKLIANWVEGGFEVKPGEVVLLENCRCNKGEKKDNEELAKKMAALCDVYVNDAFGTAHRAEATTHGIARFAPVSCAGILMGAEIDALSKALHQPARPLVAIVGGAKVSTKLTILKTLADKVDQLIVGGGIANTFLLAAGKRIGESLAEPEMVREAQQVMDIMKSRGAEVPLPIDVVVADEVSALARANRISVDEVGPHDRILDFGPKTSAKLADIIAHAGTIVWNGPVGVFEHAQFAGGTKMMASAIAHSEAFSIAGGGDTLAAIAKFHIADDVGYISTGGGAFLEFLEGKKLPAIAALEARYEG.

Residues 21 to 23 (DLN), Arg-37, 60 to 63 (HLGR), Arg-115, and Arg-148 each bind substrate. ATP is bound by residues Lys-199, Glu-321, and 347-350 (GGDT).

The protein belongs to the phosphoglycerate kinase family. In terms of assembly, monomer.

The protein localises to the cytoplasm. It carries out the reaction (2R)-3-phosphoglycerate + ATP = (2R)-3-phospho-glyceroyl phosphate + ADP. Its pathway is carbohydrate degradation; glycolysis; pyruvate from D-glyceraldehyde 3-phosphate: step 2/5. This Azoarcus sp. (strain BH72) protein is Phosphoglycerate kinase.